Here is a 226-residue protein sequence, read N- to C-terminus: uncharacterized protein (226 aa).

The helical transmembrane segment at 5–25 threads the bilayer; it reads IKTVSFAAAAILVVIICTFLI.

It is found in the cell membrane. This is an uncharacterized protein from Bacillus subtilis (strain 168).